Here is a 424-residue protein sequence, read N- to C-terminus: Dapdiamide A synthase (424 aa).

The region spanning 120-318 (QEQLALKGVA…QISKLAQAVL (199 aa)) is the ATP-grasp domain. An ATP-binding site is contributed by 147–209 (AGHAHWPVVL…QEFLAGEEFV (63 aa)). Residues glutamate 275 and glutamate 287 each contribute to the Mg(2+) site.

Requires Mg(2+) as cofactor. Mn(2+) is required as a cofactor.

It catalyses the reaction 3-[[[(2R,3R)-3-carboxyoxiran-2-yl]carbonyl]amino]-L-alanine + L-valine + ATP = dapdiamide E + ADP + phosphate + H(+). The enzyme catalyses N(3)-fumaramoyl-(S)-2,3-diaminopropanoate + L-valine + ATP = dapdiamide A + ADP + phosphate + H(+). It carries out the reaction N(3)-fumaramoyl-(S)-2,3-diaminopropanoate + L-isoleucine + ATP = dapdiamide B + ADP + phosphate + H(+). The catalysed reaction is N(3)-fumaramoyl-(S)-2,3-diaminopropanoate + L-leucine + ATP = dapdiamide C + ADP + phosphate + H(+). The protein operates within antibiotic biosynthesis. Its function is as follows. Involved in dapdiamide antibiotics biosynthesis. Ligates N-beta-fumaramoyl-DAP and valine, isoleucine or leucine to form dapdiamides A, B or C, respectively. Also ligates N-beta-epoxysuccinamoyl-DAP and valine to form dapdiamide E. The protein is Dapdiamide A synthase of Enterobacter agglomerans (Erwinia herbicola).